The chain runs to 585 residues: Pyruvate kinase (585 aa).

R32 is a substrate binding site. Positions 34, 36, 66, and 67 each coordinate K(+). Position 34 to 37 (34 to 37) interacts with ATP; that stretch reads NFSH. ATP is bound by residues R73 and K156. E221 is a binding site for Mg(2+). Substrate-binding residues include G244, D245, and T277. D245 contributes to the Mg(2+) binding site.

Belongs to the pyruvate kinase family. This sequence in the C-terminal section; belongs to the PEP-utilizing enzyme family. Mg(2+) is required as a cofactor. K(+) serves as cofactor.

It catalyses the reaction pyruvate + ATP = phosphoenolpyruvate + ADP + H(+). The protein operates within carbohydrate degradation; glycolysis; pyruvate from D-glyceraldehyde 3-phosphate: step 5/5. The chain is Pyruvate kinase (pyk) from Staphylococcus epidermidis (strain ATCC 35984 / DSM 28319 / BCRC 17069 / CCUG 31568 / BM 3577 / RP62A).